The chain runs to 1297 residues: Phosphoribosylformylglycinamidine synthase (1297 aa).

Residues 307–318 (GASTGSGGEIRD) and alanine 678 each bind ATP. Positions 718, 722, and 886 each coordinate Mg(2+). In terms of domain architecture, Glutamine amidotransferase type-1 spans 1044 to 1297 (MAILREQGVN…MFQNARKNLA (254 aa)). Catalysis depends on cysteine 1137, which acts as the Nucleophile. Catalysis depends on residues histidine 1262 and glutamate 1264.

The protein in the N-terminal section; belongs to the FGAMS family. As to quaternary structure, monomer.

It localises to the cytoplasm. It catalyses the reaction N(2)-formyl-N(1)-(5-phospho-beta-D-ribosyl)glycinamide + L-glutamine + ATP + H2O = 2-formamido-N(1)-(5-O-phospho-beta-D-ribosyl)acetamidine + L-glutamate + ADP + phosphate + H(+). The protein operates within purine metabolism; IMP biosynthesis via de novo pathway; 5-amino-1-(5-phospho-D-ribosyl)imidazole from N(2)-formyl-N(1)-(5-phospho-D-ribosyl)glycinamide: step 1/2. Its function is as follows. Phosphoribosylformylglycinamidine synthase involved in the purines biosynthetic pathway. Catalyzes the ATP-dependent conversion of formylglycinamide ribonucleotide (FGAR) and glutamine to yield formylglycinamidine ribonucleotide (FGAM) and glutamate. This chain is Phosphoribosylformylglycinamidine synthase, found in Vibrio vulnificus (strain YJ016).